The primary structure comprises 105 residues: Guanidinium exporter (105 aa).

Residue M1 is a topological domain, cytoplasmic. Residues 2–19 form a helical membrane-spanning segment; sequence SWIVLLIAGLLEVVWAIG. Over 20-28 the chain is Periplasmic; sequence LKYTHGFTR. A helical membrane pass occupies residues 29–48; sequence LTPSIITIAAMIVSIAMLSW. Over 49 to 54 the chain is Cytoplasmic; that stretch reads AMRTLP. The chain crosses the membrane as a helical span at residues 55 to 77; that stretch reads VGTAYAVWTGIGAVGAAITGILL. The Periplasmic portion of the chain corresponds to 78 to 86; that stretch reads LGESASPAR. The chain crosses the membrane as a helical span at residues 87 to 104; that stretch reads LLSLGLIVAGIIGLKLST. Position 105 (H105) is a topological domain, cytoplasmic.

It belongs to the drug/metabolite transporter (DMT) superfamily. Small multidrug resistance (SMR) (TC 2.A.7.1) family. Gdx/SugE subfamily.

The protein localises to the cell inner membrane. Functionally, guanidinium ion exporter. Couples guanidinium export to the proton motive force, exchanging one guanidinium ion for two protons. The chain is Guanidinium exporter from Citrobacter freundii.